The sequence spans 218 residues: Ribose-5-phosphate isomerase A (218 aa).

Substrate contacts are provided by residues 28–31 (TGST), 81–84 (DGAD), and 94–97 (KGGG). Catalysis depends on glutamate 103, which acts as the Proton acceptor. Lysine 121 provides a ligand contact to substrate.

The protein belongs to the ribose 5-phosphate isomerase family. As to quaternary structure, homodimer.

It carries out the reaction aldehydo-D-ribose 5-phosphate = D-ribulose 5-phosphate. It participates in carbohydrate degradation; pentose phosphate pathway; D-ribose 5-phosphate from D-ribulose 5-phosphate (non-oxidative stage): step 1/1. Its function is as follows. Catalyzes the reversible conversion of ribose-5-phosphate to ribulose 5-phosphate. The polypeptide is Ribose-5-phosphate isomerase A (Yersinia pseudotuberculosis serotype IB (strain PB1/+)).